The primary structure comprises 367 residues: Probable L-aspartate decarboxylase (367 aa).

N6-(pyridoxal phosphate)lysine is present on Lys-216.

It belongs to the group II decarboxylase family. MfnA subfamily. Pyridoxal 5'-phosphate serves as cofactor.

The enzyme catalyses L-aspartate + H(+) = beta-alanine + CO2. It participates in cofactor biosynthesis; coenzyme A biosynthesis. Functionally, catalyzes the decarboxylation of L-aspartate to produce beta-alanine. The polypeptide is Probable L-aspartate decarboxylase (Archaeoglobus fulgidus (strain ATCC 49558 / DSM 4304 / JCM 9628 / NBRC 100126 / VC-16)).